We begin with the raw amino-acid sequence, 702 residues long: Ribosomal RNA large subunit methyltransferase K/L (702 aa).

One can recognise a THUMP domain in the interval 43–154 (LIYQSLMWSR…KETAHISLDL (112 aa)).

Belongs to the methyltransferase superfamily. RlmKL family.

Its subcellular location is the cytoplasm. It carries out the reaction guanosine(2445) in 23S rRNA + S-adenosyl-L-methionine = N(2)-methylguanosine(2445) in 23S rRNA + S-adenosyl-L-homocysteine + H(+). It catalyses the reaction guanosine(2069) in 23S rRNA + S-adenosyl-L-methionine = N(2)-methylguanosine(2069) in 23S rRNA + S-adenosyl-L-homocysteine + H(+). In terms of biological role, specifically methylates the guanine in position 2445 (m2G2445) and the guanine in position 2069 (m7G2069) of 23S rRNA. This is Ribosomal RNA large subunit methyltransferase K/L from Enterobacter sp. (strain 638).